The sequence spans 428 residues: Cyclic AMP-responsive element-binding protein 3-like protein 3-B (428 aa).

Over 1–286 (MDHYSDQGGD…VMNGSNKPVQ (286 aa)) the chain is Cytoplasmic. The span at 67 to 83 (VSGSPVWSPSPSDSGIS) shows a compositional bias: low complexity. Positions 67–104 (VSGSPVWSPSPSDSGISEDPHSDHIDSPPPNASPPMEP) are disordered. The span at 93 to 103 (SPPPNASPPME) shows a compositional bias: pro residues. One can recognise a bZIP domain in the interval 210–273 (ILKKIRRKIR…ISLMEQLRRL (64 aa)). Residues 212 to 241 (KKIRRKIRNKQSAQESRKKKKEYIDGLESR) form a basic motif region. The leucine-zipper stretch occupies residues 252–273 (LQRKVFQLEKCNISLMEQLRRL). A helical; Signal-anchor for type II membrane protein transmembrane segment spans residues 287–303 (AGTCVLVLLLSFTLILL). Residues 304 to 428 (PNLKPFTDTK…SRRSPHADDM (125 aa)) lie on the Lumenal side of the membrane. Residues 381–428 (TEYDPESHNHSFDQHDEHHHGDPITGHVATVTLNPRRGSRRSPHADDM) are disordered. The segment covering 385 to 402 (PESHNHSFDQHDEHHHGD) has biased composition (basic and acidic residues). Asn389 carries an N-linked (GlcNAc...) asparagine glycan.

It belongs to the bZIP family. ATF subfamily. Binds DNA as a dimer. In terms of processing, controlled by regulated intramembrane proteolysis (RIP). A fragment containing the cytoplasmic transcription factor domain is released by proteolysis. The cleavage seems to be performed sequentially by site-1 and site-2 proteases.

Its subcellular location is the endoplasmic reticulum membrane. It is found in the nucleus. Its function is as follows. Transcriptional activator. Binds the cAMP response element (CRE). Activates transcription through box-B element and CRE. Seems to function synergistically with atf6. Regulates FGF21 transcription. This Danio rerio (Zebrafish) protein is Cyclic AMP-responsive element-binding protein 3-like protein 3-B (creb3l3b).